The following is a 101-amino-acid chain: Small ubiquitin-related modifier 5 (101 aa).

Positions 17 to 21 (IKDED) match the Required for PML-NB formation motif. Residue Lys18 forms a Glycyl lysine isopeptide (Lys-Gly) (interchain with G-Cter in SUMO1P1/SUMO5) linkage. In terms of domain architecture, Ubiquitin-like spans 20–97 (EDIKLRVIGQ…IEVYQEQIGG (78 aa)). Residue Gly97 forms a Glycyl lysine isopeptide (Gly-Lys) (interchain with K-? in acceptor proteins) linkage. A propeptide spanning residues 98 to 101 (HSTV) is cleaved from the precursor.

It belongs to the ubiquitin family. SUMO subfamily. As to quaternary structure, interacts with CBX4. Interacts with PIAS1. Found in a complex with SAE2. Interacts with UBE2I. Interacts with SP100. Interacts with HIPK2. Interacts with DAXX. Interacts with PML-RARA oncoprotein; PML-RARalpha outcompetes PML for SUMO1P1/SUMO5 conjugation. Post-translationally, cleavage of precursor form is necessary for function. Autosumoylated at Lys-18. High expression levels in testes and peripheral blood leukocyte. Expressed also in lung, placenta, liver, spleen and thymus.

It is found in the nucleus. In terms of biological role, ubiquitin-like protein that can be covalently attached to proteins as a monomer or as a lysine-linked polymer. Regulates the life cycle of promyelocytic leukemia nuclear bodies (PML-NBs). PolySUMO1P1/SUMO5 conjugation on 'Lys-160' of PML facilitates recruitment of PML-NB components, which enlarges PML-NB. SUMO1P1/SUMO5 also increases polySUMO2/3 conjugation of PML, resulting in RNF4-mediated disruption of PML-NBs. The chain is Small ubiquitin-related modifier 5 from Homo sapiens (Human).